Here is a 173-residue protein sequence, read N- to C-terminus: Adenine phosphoribosyltransferase (173 aa).

Belongs to the purine/pyrimidine phosphoribosyltransferase family. In terms of assembly, homodimer.

Its subcellular location is the cytoplasm. It carries out the reaction AMP + diphosphate = 5-phospho-alpha-D-ribose 1-diphosphate + adenine. Its pathway is purine metabolism; AMP biosynthesis via salvage pathway; AMP from adenine: step 1/1. Catalyzes a salvage reaction resulting in the formation of AMP, that is energically less costly than de novo synthesis. The sequence is that of Adenine phosphoribosyltransferase from Desulfitobacterium hafniense (strain Y51).